Consider the following 588-residue polypeptide: Disabled homolog 1 (588 aa).

The segment at 1–26 is disordered; that stretch reads MSTETELQVAVKTSAKKDSRKKGQDR. Residues 15 to 26 are compositionally biased toward basic and acidic residues; it reads AKKDSRKKGQDR. Residues 36 to 189 enclose the PID domain; it reads KGEGVRYKAK…CEQAVYQTIL (154 aa). Tyr198, Tyr220, and Tyr232 each carry phosphotyrosine. 4 disordered regions span residues 224 to 243, 420 to 444, 451 to 470, and 502 to 588; these read TSQK…NSQP, LATV…QKMG, FQMV…PSLT, and LTPV…QDGS. A compositionally biased stretch (polar residues) spans 424 to 436; that stretch reads PGTNDSARSSPQS. Composition is skewed to low complexity over residues 503-512 and 523-534; these read TPVTSTTPST and SSPSKSSASHVS. A Phosphoserine; by CDK5 modification is found at Ser524. A compositionally biased stretch (acidic residues) spans 537 to 546; it reads TADDIFEEGF.

As to quaternary structure, associates with the SH2 domains of SRC, FYN and ABL. Interacts (phosphorylated on tyrosine residues) with CRK and CRKL (via respective SH2 domain). Interacts with SIAH1, LRP8 and VLDLR. Interacts with LRP1. Interacts with APLP1 (via NPXY motif). Interacts with DAB2IP. Interacts with ZSWIM8. Phosphorylated by FYN on Tyr-198 and Tyr-220 upon reelin induction in embryonic neurons. Also found phosphorylated on Tyr-232 upon reelin induction. Also phosphorylated on Ser-524 independently of reelin signaling. Post-translationally, ubiquitinated by various cullin-5-RING E3 ubiquitin-protein ligase complexes (ECS complexes) following ligand-binding and phosphorylation, leading to its degradation. Ubiquitinated by the ECS(SOCS7) complex in the cortical plate of the developing cerebral cortex following ligand-binding and phosphorylation by FYN, leading to its degradation by the proteasome. Recognized by ZSWIM8 through a disorder targets misorder mechanism that eliminates misfolded DAB1 via ubiquitination and proteasomal degradation. Expressed mainly in brain. Specifically expressin in cortical neurons.

The protein resides in the cytoplasm. In terms of biological role, signaling adapter of the reelin-mediated signaling pathway, which regulates the migration and differentiation of postmitotic neurons during brain development. Mediates intracellular transduction of Reelin signaling following reelin (RELN)-binding to its receptor: acts by docking proteins through its phosphotyrosine residues and PID domain. This is Disabled homolog 1 from Mus musculus (Mouse).